The chain runs to 144 residues: uncharacterized protein (144 aa).

4 consecutive transmembrane segments (helical) span residues 27–47 (VVCA…IPDI), 49–69 (LLPI…LLAL), 83–103 (IVLL…DATV), and 106–126 (ALDM…ILNV).

It localises to the membrane. This is an uncharacterized protein from Saccharomyces cerevisiae (strain ATCC 204508 / S288c) (Baker's yeast).